A 109-amino-acid polypeptide reads, in one-letter code: Sperm-specific class P protein 16 (109 aa).

Residues 2–109 enclose the MSP domain; it reads SLTADPPACT…TVTIPMSATA (108 aa).

Expressed at higher level in testis.

The sequence is that of Sperm-specific class P protein 16 (ssp-16) from Caenorhabditis elegans.